A 320-amino-acid polypeptide reads, in one-letter code: Methionyl-tRNA formyltransferase (320 aa).

117–120 (SLLP) contributes to the (6S)-5,6,7,8-tetrahydrofolate binding site.

This sequence belongs to the Fmt family.

The catalysed reaction is L-methionyl-tRNA(fMet) + (6R)-10-formyltetrahydrofolate = N-formyl-L-methionyl-tRNA(fMet) + (6S)-5,6,7,8-tetrahydrofolate + H(+). Its function is as follows. Attaches a formyl group to the free amino group of methionyl-tRNA(fMet). The formyl group appears to play a dual role in the initiator identity of N-formylmethionyl-tRNA by promoting its recognition by IF2 and preventing the misappropriation of this tRNA by the elongation apparatus. The sequence is that of Methionyl-tRNA formyltransferase from Bordetella petrii (strain ATCC BAA-461 / DSM 12804 / CCUG 43448).